The primary structure comprises 778 residues: Lon protease (778 aa).

Residues 6–207 enclose the Lon N-terminal domain; the sequence is LPLMALRDMV…TVISTLTSNI (202 aa). 356–363 is an ATP binding site; sequence GPPGVGKT. Residues 592–773 form the Lon proteolytic domain; it reads EDQIGSTTGL…DQVLKHALVE (182 aa). Residues S679 and K722 contribute to the active site.

Belongs to the peptidase S16 family. As to quaternary structure, homohexamer. Organized in a ring with a central cavity.

It is found in the cytoplasm. It catalyses the reaction Hydrolysis of proteins in presence of ATP.. ATP-dependent serine protease that mediates the selective degradation of mutant and abnormal proteins as well as certain short-lived regulatory proteins. Required for cellular homeostasis and for survival from DNA damage and developmental changes induced by stress. Degrades polypeptides processively to yield small peptide fragments that are 5 to 10 amino acids long. Binds to DNA in a double-stranded, site-specific manner. The polypeptide is Lon protease (Rickettsia felis (strain ATCC VR-1525 / URRWXCal2) (Rickettsia azadi)).